A 435-amino-acid chain; its full sequence is Estrogen-related receptor gamma (435 aa).

Residues 1 to 64 (MSNKDRHIDS…GLDSPPLYPS (64 aa)) are disordered. Over residues 10 to 29 (SSCSSFIKTEPSSPASLTDS) the composition is skewed to polar residues. Positions 34–47 (SPGGSSDASGSYSS) are enriched in low complexity. A DNA-binding region (nuclear receptor) is located at residues 102–177 (KRLCLVCGDI…VGMLKEGVRL (76 aa)). 2 consecutive NR C4-type zinc fingers follow at residues 105–125 (CLVC…CEAC) and 141–160 (CPAT…CQAC). In terms of domain architecture, NR LBD spans 210-434 (PYNKIVSHLL…KLFSEMLEAK (225 aa)).

It belongs to the nuclear hormone receptor family. NR3 subfamily. In terms of assembly, homodimer. Interacts with NRIP1, NCOA1 and NCOR2. Binds TLE1, PNRC1 and PNRC2. Binds GRIP1. In terms of processing, acetylated by PCAF/KAT2 (in vitro).

Its subcellular location is the nucleus. In terms of biological role, orphan receptor that acts as a transcription activator in the absence of bound ligand. Binds specifically to an estrogen response element and activates reporter genes controlled by estrogen response elements. Induces the expression of PERM1 in the skeletal muscle. This chain is Estrogen-related receptor gamma (ESRRG), found in Pongo abelii (Sumatran orangutan).